Consider the following 380-residue polypeptide: Cytochrome b (380 aa).

4 consecutive transmembrane segments (helical) span residues 34–54 (FGSL…LLAM), 78–99 (WLIR…YMHI), 114–134 (WNTG…GYVL), and 179–199 (FFAL…IHLT). 2 residues coordinate heme b: His84 and His98. Heme b contacts are provided by His183 and His197. His202 contacts a ubiquinone. Helical transmembrane passes span 227–247 (LKDI…ALFT), 289–309 (LGGV…PLLH), 321–341 (LSQS…WVGS), and 348–368 (FIII…ILLP).

It belongs to the cytochrome b family. The cytochrome bc1 complex contains 11 subunits: 3 respiratory subunits (MT-CYB, CYC1 and UQCRFS1), 2 core proteins (UQCRC1 and UQCRC2) and 6 low-molecular weight proteins (UQCRH/QCR6, UQCRB/QCR7, UQCRQ/QCR8, UQCR10/QCR9, UQCR11/QCR10 and a cleavage product of UQCRFS1). This cytochrome bc1 complex then forms a dimer. Heme b is required as a cofactor.

It localises to the mitochondrion inner membrane. Functionally, component of the ubiquinol-cytochrome c reductase complex (complex III or cytochrome b-c1 complex) that is part of the mitochondrial respiratory chain. The b-c1 complex mediates electron transfer from ubiquinol to cytochrome c. Contributes to the generation of a proton gradient across the mitochondrial membrane that is then used for ATP synthesis. This chain is Cytochrome b (MT-CYB), found in Falco peregrinus (Peregrine falcon).